A 389-amino-acid chain; its full sequence is Smad nuclear interacting protein 1 (389 aa).

Over residues 1–10 (MKAGKSERER) the composition is skewed to basic and acidic residues. Residues 1 to 212 (MKAGKSERER…GNKNKEVPVK (212 aa)) form a disordered region. Phosphoserine is present on serine 18. Lysine 28 participates in a covalent cross-link: Glycyl lysine isopeptide (Lys-Gly) (interchain with G-Cter in SUMO); alternate. Lysine 28 participates in a covalent cross-link: Glycyl lysine isopeptide (Lys-Gly) (interchain with G-Cter in SUMO1); alternate. Residue lysine 28 forms a Glycyl lysine isopeptide (Lys-Gly) (interchain with G-Cter in SUMO2); alternate linkage. Residues 28–43 (KQERLSPEPVAHRRPD) show a composition bias toward basic and acidic residues. Phosphoserine is present on residues serine 33 and serine 48. A compositionally biased stretch (low complexity) spans 54–72 (AESGSAGHRGSRARGASRS). Basic residues predominate over residues 73–95 (PAKKKSKSSGRRSKSPRTKRSRS). Serine 95 carries the phosphoserine modification. 2 stretches are compositionally biased toward basic and acidic residues: residues 103-138 (VKQE…ERDR) and 147-163 (RSSD…DRDS). Residue lysine 104 forms a Glycyl lysine isopeptide (Lys-Gly) (interchain with G-Cter in SUMO2) linkage. At serine 149 the chain carries Phosphoserine. A coiled-coil region spans residues 166–197 (LQAQEEERDFNNARRREHRQQNESAGAEAQEV). Lysine 214 is covalently cross-linked (Glycyl lysine isopeptide (Lys-Gly) (interchain with G-Cter in SUMO2)). One can recognise an FHA domain in the interval 272–335 (YLLGRHRRIA…NGTFLNNKRI (64 aa)). A compositionally biased stretch (basic and acidic residues) spans 363–373 (ESSDTSELDRK). Residues 363–389 (ESSDTSELDRKEDEDEEEEEEMVSDSS) form a disordered region. A compositionally biased stretch (acidic residues) spans 374 to 389 (EDEDEEEEEEMVSDSS). Residue serine 386 is modified to Phosphoserine.

Component of activated spliceosome complexes. Component of the minor spliceosome, which splices U12-type introns. Binds SMAD4 and CREBBP/EP300. Binds the SMAD1/OAZ1/PSMB4 complex. Interacts with DROSHA and SMARCA4. Component of the SNARP complex which consists at least of SNIP1, SNW1, THRAP3, BCLAF1 and PNN. In terms of processing, degraded by the proteasome upon binding to the SMAD1/OAZ1/PSMB4 complex.

Its subcellular location is the nucleus. Functionally, required for pre-mRNA splicing as component of the spliceosome. As a component of the minor spliceosome, involved in the splicing of U12-type introns in pre-mRNAs. Down-regulates NF-kappa-B signaling by competing with RELA for CREBBP/EP300 binding. Involved in the microRNA (miRNA) biogenesis. May be involved in cyclin-D1/CCND1 mRNA stability through the SNARP complex which associates with both the 3'end of the CCND1 gene and its mRNA. The protein is Smad nuclear interacting protein 1 (Snip1) of Rattus norvegicus (Rat).